We begin with the raw amino-acid sequence, 505 residues long: MLNRVRSAVAHLVSSGGAPPPRPKSPDLPNAASAPPAAAPEAPRSPPAKAGSGSATPAKAVEARASFSRPTFLQLSPGGLRRADDHAGRAVQSPPDTGRRLPWSTGYAEVINAGKSRHNEDQACCEVVYVEGRRSVTGVPREPSRGQGLCFYYWGLFDGHAGGGAAEMASRLLHRHIREQLKDLVEILQDPSPPPLCLPTTPGTPDSSDPSHLLGPQSCWSSQKEVSHESLVVGAVENAFQLMDEQMARERRGHQVEGGCCALVVIYLLGKVYVANAGDSRAIIVRNGEIIPMSREFTPETERQRLQLLGFLKPELLGSEFTHLEFPRRVLPKELGQRMLYRDQNMTGWAYKKIELEDLRFPLVCGEGKKARVMATIGVTRGLGDHSLKVCSSTLPIKPFLSCFPEVRVYDLTQYEHCPDDVLVLGTDGLWDVTTDCEVAATVDRVLSAYEPNDHSRYTALAQALVLGARGTPRDRGWRLPNNKLGSGDDISVFVIPLGGPGSYS.

Residues 1–103 (MLNRVRSAVA…PPDTGRRLPW (103 aa)) form a disordered region. Over residues 27-50 (DLPNAASAPPAAAPEAPRSPPAKA) the composition is skewed to low complexity. Ser-66 and Ser-76 each carry phosphoserine. Residues 104–498 (STGYAEVINA…DDISVFVIPL (395 aa)) form the PPM-type phosphatase domain.

It belongs to the PP2C family. Interacts with UBE2I/UBC9.

The enzyme catalyses O-phospho-L-seryl-[protein] + H2O = L-seryl-[protein] + phosphate. The catalysed reaction is O-phospho-L-threonyl-[protein] + H2O = L-threonyl-[protein] + phosphate. The sequence is that of Protein phosphatase 1J (PPM1J) from Homo sapiens (Human).